The chain runs to 81 residues: Protein RALF-like 6 (81 aa).

The signal sequence occupies residues 1 to 29 (MAAHKKSHIRIFFVSVMIILSLFSGFGEG). Cystine bridges form between cysteine 46–cysteine 54 and cysteine 66–cysteine 72.

This sequence belongs to the plant rapid alkalinization factor (RALF) family.

It localises to the secreted. In terms of biological role, cell signaling peptide that may regulate plant stress, growth, and development. Mediates a rapid alkalinization of extracellular space by mediating a transient increase in the cytoplasmic Ca(2+) concentration leading to a calcium-dependent signaling events through a cell surface receptor and a concomitant activation of some intracellular mitogen-activated protein kinases. This chain is Protein RALF-like 6 (RALFL6), found in Arabidopsis thaliana (Mouse-ear cress).